We begin with the raw amino-acid sequence, 476 residues long: Sulfate adenylyltransferase subunit 1 (476 aa).

Residues 25 to 241 (KSLLRFLTCG…LETVEVQRVV (217 aa)) enclose the tr-type G domain. Residues 34 to 41 (GSVDDGKS) are G1. 34–41 (GSVDDGKS) provides a ligand contact to GTP. Residues 92–96 (GITID) are G2. The G3 stretch occupies residues 113–116 (DTPG). GTP is bound by residues 113–117 (DTPGH) and 168–171 (NKMD). A G4 region spans residues 168 to 171 (NKMD). A G5 region spans residues 206-208 (SAL).

It belongs to the TRAFAC class translation factor GTPase superfamily. Classic translation factor GTPase family. CysN/NodQ subfamily. As to quaternary structure, heterodimer composed of CysD, the smaller subunit, and CysN.

The enzyme catalyses sulfate + ATP + H(+) = adenosine 5'-phosphosulfate + diphosphate. Its pathway is sulfur metabolism; hydrogen sulfide biosynthesis; sulfite from sulfate: step 1/3. Functionally, with CysD forms the ATP sulfurylase (ATPS) that catalyzes the adenylation of sulfate producing adenosine 5'-phosphosulfate (APS) and diphosphate, the first enzymatic step in sulfur assimilation pathway. APS synthesis involves the formation of a high-energy phosphoric-sulfuric acid anhydride bond driven by GTP hydrolysis by CysN coupled to ATP hydrolysis by CysD. The sequence is that of Sulfate adenylyltransferase subunit 1 from Erwinia tasmaniensis (strain DSM 17950 / CFBP 7177 / CIP 109463 / NCPPB 4357 / Et1/99).